The following is a 617-amino-acid chain: Dihydroxy-acid dehydratase (617 aa).

Mg(2+) is bound at residue D81. C122 provides a ligand contact to [2Fe-2S] cluster. D123 and K124 together coordinate Mg(2+). N6-carboxylysine is present on K124. [2Fe-2S] cluster is bound at residue C197. E493 contributes to the Mg(2+) binding site. S519 (proton acceptor) is an active-site residue.

The protein belongs to the IlvD/Edd family. In terms of assembly, homodimer. [2Fe-2S] cluster is required as a cofactor. It depends on Mg(2+) as a cofactor.

It catalyses the reaction (2R)-2,3-dihydroxy-3-methylbutanoate = 3-methyl-2-oxobutanoate + H2O. It carries out the reaction (2R,3R)-2,3-dihydroxy-3-methylpentanoate = (S)-3-methyl-2-oxopentanoate + H2O. It participates in amino-acid biosynthesis; L-isoleucine biosynthesis; L-isoleucine from 2-oxobutanoate: step 3/4. Its pathway is amino-acid biosynthesis; L-valine biosynthesis; L-valine from pyruvate: step 3/4. Its function is as follows. Functions in the biosynthesis of branched-chain amino acids. Catalyzes the dehydration of (2R,3R)-2,3-dihydroxy-3-methylpentanoate (2,3-dihydroxy-3-methylvalerate) into 2-oxo-3-methylpentanoate (2-oxo-3-methylvalerate) and of (2R)-2,3-dihydroxy-3-methylbutanoate (2,3-dihydroxyisovalerate) into 2-oxo-3-methylbutanoate (2-oxoisovalerate), the penultimate precursor to L-isoleucine and L-valine, respectively. The polypeptide is Dihydroxy-acid dehydratase (Corynebacterium aurimucosum (strain ATCC 700975 / DSM 44827 / CIP 107346 / CN-1) (Corynebacterium nigricans)).